The sequence spans 87 residues: U3-theraphotoxin-Hhn1p (87 aa).

A signal peptide spans Met-1–Ala-24. The propeptide occupies Ser-25–Arg-52. Cystine bridges form between Cys-54/Cys-67, Cys-61/Cys-72, and Cys-66/Cys-79.

This sequence belongs to the neurotoxin 10 (Hwtx-1) family. 51 (Hntx-8) subfamily. Hntx-8 sub-subfamily. As to expression, expressed by the venom gland.

The protein resides in the secreted. Ion channel inhibitor. The polypeptide is U3-theraphotoxin-Hhn1p (Cyriopagopus hainanus (Chinese bird spider)).